The chain runs to 864 residues: MSKSAVSPMMQQYLGIKAQHTDKLVFYRMGDFYEMFFDDAVEAAKLLDITLTTRGQVDGEPVKMAGVPFHAAEQYLARLVKLGKSVAICEQVGEVGAGKGPVERKVVRIVTPGTLTDSALLEDKETNRIVAVSPDKKYIGLAWASLQSGEFKTKLTTVDKLDDELARLQAAEILLPDSKNAPQLQTASGVTRLNAWQFAADAGEKLLTEYFGCQDLRGFGLDGKEHAVAIGAAGALLNYIRLTQNLMPQHLDGLSLETDSQYIGMDAATRRNLEITQTLSGKKSPTLMSTLDLCATHMGSRLLALWLHHPLRNRAHIRARQEAVAALESQYKPLQCRLKNIADIERIAARIAVGNARPRDLASLRDSLFELAQIDLSANGSSLLETLKAVFPENLSTAEQLRQAILPEPSVWLKDGNVINHGFHPELDELRRIQNHGDEFLLDLEAKERERTGLSTLKVEFNRVHGFYIELSKTQAEQAPADYQRRQTLKNAERFITPELKAFEDKVLTAQEQALALEKQLFDGVLKNLQTALPQLQKAAKAAAALDVLSTFSALAKERNFVRPEFADYPVIHIENGRHPVVEQQVRHFTANHTDLDHKHRLMLLTGPNMGGKSTYMRQVALIVLLAHTGCFVPADAATIGPIDQIFTRIGASDDLASNRSTFMVEMSETAYILHHATEQSLVLMDEVGRGTSTFDGLALAHAVAEHLLQKNKSFSLFATHYFELTYLPEAHAAAVNMHLSALEQGQDIVFLHQIQPGPAGKSYGIAVAKLAGLPVRALKSAQKHLNGLENQAAANRPQLDIFSTMPSEKGDEPNVGNFVDKAEEKHFEGILAAALEKLDPDSLTPREALSELYRLKDLCKSVS.

G607–S614 serves as a coordination point for ATP.

This sequence belongs to the DNA mismatch repair MutS family.

Functionally, this protein is involved in the repair of mismatches in DNA. It is possible that it carries out the mismatch recognition step. This protein has a weak ATPase activity. The protein is DNA mismatch repair protein MutS of Neisseria meningitidis serogroup C / serotype 2a (strain ATCC 700532 / DSM 15464 / FAM18).